We begin with the raw amino-acid sequence, 110 residues long: Large ribosomal subunit protein uL22 (110 aa).

Belongs to the universal ribosomal protein uL22 family. As to quaternary structure, part of the 50S ribosomal subunit.

Its function is as follows. This protein binds specifically to 23S rRNA; its binding is stimulated by other ribosomal proteins, e.g. L4, L17, and L20. It is important during the early stages of 50S assembly. It makes multiple contacts with different domains of the 23S rRNA in the assembled 50S subunit and ribosome. Functionally, the globular domain of the protein is located near the polypeptide exit tunnel on the outside of the subunit, while an extended beta-hairpin is found that lines the wall of the exit tunnel in the center of the 70S ribosome. The sequence is that of Large ribosomal subunit protein uL22 from Nitrosococcus oceani (strain ATCC 19707 / BCRC 17464 / JCM 30415 / NCIMB 11848 / C-107).